Here is a 460-residue protein sequence, read N- to C-terminus: UDP-N-acetylmuramate--L-alanine ligase (460 aa).

ATP is bound at residue 119 to 125 (GSHGKTT).

This sequence belongs to the MurCDEF family.

It is found in the cytoplasm. It catalyses the reaction UDP-N-acetyl-alpha-D-muramate + L-alanine + ATP = UDP-N-acetyl-alpha-D-muramoyl-L-alanine + ADP + phosphate + H(+). The protein operates within cell wall biogenesis; peptidoglycan biosynthesis. Its function is as follows. Cell wall formation. The sequence is that of UDP-N-acetylmuramate--L-alanine ligase from Alkaliphilus metalliredigens (strain QYMF).